A 310-amino-acid chain; its full sequence is Nucleotide-binding protein MAP_1147 (310 aa).

30–37 (GLSGAGRG) is an ATP binding site. 81-84 (DVRS) contributes to the GTP binding site.

The protein belongs to the RapZ-like family.

Its function is as follows. Displays ATPase and GTPase activities. The sequence is that of Nucleotide-binding protein MAP_1147 from Mycolicibacterium paratuberculosis (strain ATCC BAA-968 / K-10) (Mycobacterium paratuberculosis).